The following is a 408-amino-acid chain: Zinc finger protein 764 (408 aa).

The KRAB domain occupies 26–97 (VSFADVAVYF…AAQDPEVAKC (72 aa)). Residues 91 to 167 (DPEVAKCQTQ…GRPSLCAHPP (77 aa)) are disordered. C2H2-type zinc fingers lie at residues 175–197 (HGCY…VYSH), 203–225 (FHCT…RAIH), 231–253 (HRCL…LRVH), 259–281 (YGCA…RRVH), 287–309 (FPCP…VRTH), 315–337 (YPCP…RRTH), and 343–365 (YPCP…QWVH).

It belongs to the krueppel C2H2-type zinc-finger protein family. Interacts (via KRAB domain) with NR3C1/GR (via NR LBD domain); the interaction regulates transcription factor activity of NR3C1 by directing its actions toward certain biologic pathways.

The protein localises to the nucleus. Zinc finger protein that functions as a cofactor for steroid hormone receptors, such as NR3C1/GR. Directs NR3C1/GR transcriptional activity toward specific biologic pathways by changing NR3C1/GR binding and transcriptional activity on the glucocorticoid-responsive genes. In Homo sapiens (Human), this protein is Zinc finger protein 764.